A 118-amino-acid polypeptide reads, in one-letter code: Large ribosomal subunit protein uL18 (118 aa).

It belongs to the universal ribosomal protein uL18 family. Part of the 50S ribosomal subunit; part of the 5S rRNA/L5/L18/L25 subcomplex. Contacts the 5S and 23S rRNAs.

Functionally, this is one of the proteins that bind and probably mediate the attachment of the 5S RNA into the large ribosomal subunit, where it forms part of the central protuberance. The sequence is that of Large ribosomal subunit protein uL18 from Rickettsia felis (strain ATCC VR-1525 / URRWXCal2) (Rickettsia azadi).